Consider the following 37-residue polypeptide: Large ribosomal subunit protein bL36 (37 aa).

This sequence belongs to the bacterial ribosomal protein bL36 family.

The protein is Large ribosomal subunit protein bL36 (rpmJ) of Oleidesulfovibrio alaskensis (strain ATCC BAA-1058 / DSM 17464 / G20) (Desulfovibrio alaskensis).